A 277-amino-acid polypeptide reads, in one-letter code: Uridine-cytidine kinase 1 (277 aa).

Residues 1 to 10 are compositionally biased toward gly residues; the sequence is MASAGGGDCE. Residues 1–29 form a disordered region; that stretch reads MASAGGGDCEGAGPEADRPHQRPFLIGVS. Residue 30-38 coordinates ATP; that stretch reads GGTASGKST. 6 residues coordinate substrate: aspartate 87, tyrosine 115, histidine 120, arginine 169, arginine 178, and glutamine 186. Position 215 (aspartate 215) interacts with ATP. A disordered region spans residues 246–277; sequence RSHKRTFPEPGEHPAVLASGKRSHLESSSRPH. Threonine 251 is modified (phosphothreonine). Residues 268–277 are compositionally biased toward basic and acidic residues; sequence SHLESSSRPH.

It belongs to the uridine kinase family.

The enzyme catalyses uridine + ATP = UMP + ADP + H(+). It catalyses the reaction cytidine + ATP = CMP + ADP + H(+). Its pathway is pyrimidine metabolism; CTP biosynthesis via salvage pathway; CTP from cytidine: step 1/3. The protein operates within pyrimidine metabolism; UMP biosynthesis via salvage pathway; UMP from uridine: step 1/1. In terms of biological role, phosphorylates uridine and cytidine to uridine monophosphate and cytidine monophosphate. Does not phosphorylate deoxyribonucleosides or purine ribonucleosides. Can use ATP or GTP as a phosphate donor. The polypeptide is Uridine-cytidine kinase 1 (UCK1) (Bos taurus (Bovine)).